The following is a 431-amino-acid chain: tRNA(Ile)-lysidine synthase (431 aa).

25–30 provides a ligand contact to ATP; the sequence is SGGPDS.

The protein belongs to the tRNA(Ile)-lysidine synthase family.

The protein resides in the cytoplasm. It catalyses the reaction cytidine(34) in tRNA(Ile2) + L-lysine + ATP = lysidine(34) in tRNA(Ile2) + AMP + diphosphate + H(+). Ligates lysine onto the cytidine present at position 34 of the AUA codon-specific tRNA(Ile) that contains the anticodon CAU, in an ATP-dependent manner. Cytidine is converted to lysidine, thus changing the amino acid specificity of the tRNA from methionine to isoleucine. This is tRNA(Ile)-lysidine synthase from Lactobacillus johnsonii (strain CNCM I-12250 / La1 / NCC 533).